The sequence spans 521 residues: Protein translocase subunit SecD (521 aa).

The next 6 helical transmembrane spans lie at 8–28 (LKLA…LPNG), 359–379 (AGIL…VLFY), 388–408 (IALL…EATL), 410–430 (LPGM…NILI), 459–479 (IVDS…FGTG), and 483–503 (GFAL…LLLS).

The protein belongs to the SecD/SecF family. SecD subfamily. In terms of assembly, forms a complex with SecF. Part of the essential Sec protein translocation apparatus which comprises SecA, SecYEG and auxiliary proteins SecDF-YajC and YidC.

It is found in the cell inner membrane. Part of the Sec protein translocase complex. Interacts with the SecYEG preprotein conducting channel. SecDF uses the proton motive force (PMF) to complete protein translocation after the ATP-dependent function of SecA. The polypeptide is Protein translocase subunit SecD (Acetobacter pasteurianus (strain NBRC 105184 / IFO 3283-01)).